The sequence spans 340 residues: Heat-inducible transcription repressor HrcA (340 aa).

The protein belongs to the HrcA family.

Negative regulator of class I heat shock genes (grpE-dnaK-dnaJ and groELS operons). Prevents heat-shock induction of these operons. This chain is Heat-inducible transcription repressor HrcA, found in Burkholderia cenocepacia (strain HI2424).